We begin with the raw amino-acid sequence, 255 residues long: Ribonuclease HII (255 aa).

The region spanning 73–255 is the RNase H type-2 domain; the sequence is LYIGGIDEAG…HRKSFLKNIL (183 aa). A divalent metal cation-binding residues include Asp79, Glu80, and Asp171.

The protein belongs to the RNase HII family. Mn(2+) is required as a cofactor. Requires Mg(2+) as cofactor.

It localises to the cytoplasm. It carries out the reaction Endonucleolytic cleavage to 5'-phosphomonoester.. In terms of biological role, endonuclease that specifically degrades the RNA of RNA-DNA hybrids. The protein is Ribonuclease HII of Clostridioides difficile (strain 630) (Peptoclostridium difficile).